The sequence spans 293 residues: Pyridoxal 5'-phosphate synthase subunit PdxS (293 aa).

Asp23 contacts D-ribose 5-phosphate. Lys80 functions as the Schiff-base intermediate with D-ribose 5-phosphate in the catalytic mechanism. D-ribose 5-phosphate is bound at residue Gly152. Arg164 is a binding site for D-glyceraldehyde 3-phosphate. D-ribose 5-phosphate is bound by residues Gly213 and 234–235 (GS).

The protein belongs to the PdxS/SNZ family. In terms of assembly, in the presence of PdxT, forms a dodecamer of heterodimers.

The catalysed reaction is aldehydo-D-ribose 5-phosphate + D-glyceraldehyde 3-phosphate + L-glutamine = pyridoxal 5'-phosphate + L-glutamate + phosphate + 3 H2O + H(+). It functions in the pathway cofactor biosynthesis; pyridoxal 5'-phosphate biosynthesis. In terms of biological role, catalyzes the formation of pyridoxal 5'-phosphate from ribose 5-phosphate (RBP), glyceraldehyde 3-phosphate (G3P) and ammonia. The ammonia is provided by the PdxT subunit. Can also use ribulose 5-phosphate and dihydroxyacetone phosphate as substrates, resulting from enzyme-catalyzed isomerization of RBP and G3P, respectively. This chain is Pyridoxal 5'-phosphate synthase subunit PdxS, found in Herpetosiphon aurantiacus (strain ATCC 23779 / DSM 785 / 114-95).